The following is a 51-amino-acid chain: Sperm protamine P1 (51 aa).

Cystine bridges form between Cys-7–Cys-15 and Cys-38–Cys-48.

This sequence belongs to the protamine P1 family. As to quaternary structure, cross-linked by interchain disulfide bonds around the DNA-helix. Phosphorylated by SRPK1. As to expression, testis.

The protein localises to the nucleus. It is found in the chromosome. In terms of biological role, protamines substitute for histones in the chromatin of sperm during the haploid phase of spermatogenesis. They compact sperm DNA into a highly condensed, stable and inactive complex. The protein is Sperm protamine P1 (Prm1) of Mus musculus (Mouse).